Consider the following 232-residue polypeptide: Ashwin (232 aa).

Phosphoserine is present on residues Ser-112, Ser-182, Ser-184, Ser-189, and Ser-193. The disordered stretch occupies residues 163-232 (KMEHNNNDTQ…KRKIQHVTWP (70 aa)). Phosphothreonine occurs at positions 197 and 198. A compositionally biased stretch (basic and acidic residues) spans 206–224 (APKEEAEATNHLKPPEVKR).

This sequence belongs to the ashwin family. Component of the tRNA-splicing ligase complex.

The protein localises to the nucleus. This Mus musculus (Mouse) protein is Ashwin.